Consider the following 204-residue polypeptide: Imidazoleglycerol-phosphate dehydratase (204 aa).

Residues 183 to 204 (DPRMDGITPSTKGTLSESGDSQ) are disordered. Over residues 190–204 (TPSTKGTLSESGDSQ) the composition is skewed to polar residues.

Belongs to the imidazoleglycerol-phosphate dehydratase family.

It is found in the cytoplasm. It catalyses the reaction D-erythro-1-(imidazol-4-yl)glycerol 3-phosphate = 3-(imidazol-4-yl)-2-oxopropyl phosphate + H2O. It participates in amino-acid biosynthesis; L-histidine biosynthesis; L-histidine from 5-phospho-alpha-D-ribose 1-diphosphate: step 6/9. The sequence is that of Imidazoleglycerol-phosphate dehydratase from Alcanivorax borkumensis (strain ATCC 700651 / DSM 11573 / NCIMB 13689 / SK2).